We begin with the raw amino-acid sequence, 414 residues long: uncharacterized protein (414 aa).

Disordered regions lie at residues 136–168 (SSKSMAPTAEKELEKPLENGSELQEGDSLTVPT), 298–322 (KNFPDSGMRRAVQTPSPQNKMSYHR), and 350–382 (PPHSRPMHGSYNKVHVNKEPKPNLSPDKYMSTS).

This is an uncharacterized protein from Macaca fascicularis (Crab-eating macaque).